The chain runs to 363 residues: 3-isopropylmalate dehydrogenase (363 aa).

78–91 provides a ligand contact to NAD(+); sequence GPKWENLPPESQPE. Substrate is bound by residues Arg-99, Arg-109, Arg-138, and Asp-227. 3 residues coordinate Mg(2+): Asp-227, Asp-251, and Asp-255. NAD(+) is bound at residue 285–297; the sequence is GSAPDIAGKNIAN.

It belongs to the isocitrate and isopropylmalate dehydrogenases family. LeuB type 1 subfamily. As to quaternary structure, homodimer. Mg(2+) serves as cofactor. The cofactor is Mn(2+).

It is found in the cytoplasm. The enzyme catalyses (2R,3S)-3-isopropylmalate + NAD(+) = 4-methyl-2-oxopentanoate + CO2 + NADH. Its pathway is amino-acid biosynthesis; L-leucine biosynthesis; L-leucine from 3-methyl-2-oxobutanoate: step 3/4. In terms of biological role, catalyzes the oxidation of 3-carboxy-2-hydroxy-4-methylpentanoate (3-isopropylmalate) to 3-carboxy-4-methyl-2-oxopentanoate. The product decarboxylates to 4-methyl-2 oxopentanoate. This chain is 3-isopropylmalate dehydrogenase, found in Salmonella paratyphi A (strain ATCC 9150 / SARB42).